The following is a 302-amino-acid chain: Vacuolar protein sorting-associated protein 26A (302 aa).

This sequence belongs to the VPS26 family. In terms of assembly, component of the retromer complex which consists of VPS29 (MAG1), VPS26 (VPS26A or VPS26B), VPS35 (VPS35A or VPS35B or VPS35C), VPS5/17 (SNX1 or SNX2A or SNX2B). Component of a retromer subcomplex consisting of VPS29 (MAG1), VPS26 (VPS26A or VPS26B), VPS35 (VPS35A or VPS35B or VPS35C).

It localises to the cytoplasm. Its subcellular location is the endosome membrane. It is found in the prevacuolar compartment membrane. The protein resides in the golgi apparatus. The protein localises to the trans-Golgi network membrane. Plays a role in vesicular protein sorting. Component of the membrane-associated retromer complex which is essential in endosome-to-Golgi retrograde transport. The VPS29-VPS26-VPS35 subcomplex may be involved in recycling of specific cargos from endosome to the plasma membrane. The polypeptide is Vacuolar protein sorting-associated protein 26A (VPS26A) (Arabidopsis thaliana (Mouse-ear cress)).